Here is a 65-residue protein sequence, read N- to C-terminus: Protein YSY6 (65 aa).

A helical membrane pass occupies residues 45 to 65 (LGILLFLLVGGGVLQLISYIL).

Belongs to the RAMP4 family.

It localises to the membrane. The protein localises to the endoplasmic reticulum membrane. In terms of biological role, interacts with target proteins during their translocation into the lumen of the endoplasmic reticulum. Protects unfolded target proteins against degradation during ER stress. May facilitate glycosylation of target proteins after termination of ER stress. In Saccharomyces cerevisiae (strain ATCC 204508 / S288c) (Baker's yeast), this protein is Protein YSY6 (YSY6).